A 461-amino-acid chain; its full sequence is Photosystem II CP43 reaction center protein (461 aa).

A propeptide spanning residues 1–2 (ME) is cleaved from the precursor. T3 is subject to N-acetylthreonine. Phosphothreonine is present on T3. 5 helical membrane passes run 57-81 (LFEVAHFVPEKPMYEQGLILLPHLA), 122-143 (LIGPETLEESFPFFGYVWKDKN), 166-188 (KAMYFGGVYDTWAPGGGDVRVIT), 243-263 (KPFAWARRALVWSGEAYLSYS), and 279-300 (WFNNTAYPSEFYGPTGPEASQA). A [CaMn4O5] cluster-binding site is contributed by E355. The helical transmembrane segment at 435 to 459 (RARAAAAGFEKGIERETEPALSMKP) threads the bilayer.

Belongs to the PsbB/PsbC family. PsbC subfamily. As to quaternary structure, PSII is composed of 1 copy each of membrane proteins PsbA, PsbB, PsbC, PsbD, PsbE, PsbF, PsbH, PsbI, PsbJ, PsbK, PsbL, PsbM, PsbT, PsbX, PsbY, PsbZ, Psb30/Ycf12, at least 3 peripheral proteins of the oxygen-evolving complex and a large number of cofactors. It forms dimeric complexes. Requires Binds multiple chlorophylls and provides some of the ligands for the Ca-4Mn-5O cluster of the oxygen-evolving complex. It may also provide a ligand for a Cl- that is required for oxygen evolution. PSII binds additional chlorophylls, carotenoids and specific lipids. as cofactor.

It is found in the plastid. The protein resides in the chloroplast thylakoid membrane. Its function is as follows. One of the components of the core complex of photosystem II (PSII). It binds chlorophyll and helps catalyze the primary light-induced photochemical processes of PSII. PSII is a light-driven water:plastoquinone oxidoreductase, using light energy to abstract electrons from H(2)O, generating O(2) and a proton gradient subsequently used for ATP formation. In Chlorokybus atmophyticus (Soil alga), this protein is Photosystem II CP43 reaction center protein.